The chain runs to 855 residues: DNA mismatch repair protein MutS (855 aa).

Position 613 to 620 (613 to 620 (GPNMGGKS)) interacts with ATP. A disordered region spans residues 796–816 (TTSLPHEMPSQQSGKPASPMQ).

The protein belongs to the DNA mismatch repair MutS family.

In terms of biological role, this protein is involved in the repair of mismatches in DNA. It is possible that it carries out the mismatch recognition step. This protein has a weak ATPase activity. This Pseudomonas aeruginosa (strain LESB58) protein is DNA mismatch repair protein MutS.